The primary structure comprises 193 residues: Fibrillarin-like rRNA/tRNA 2'-O-methyltransferase (193 aa).

Residues 82-83, 100-101, 125-126, and 145-148 contribute to the S-adenosyl-L-methionine site; these read TT, EF, DA, and DVAQ.

This sequence belongs to the methyltransferase superfamily. Fibrillarin family. As to quaternary structure, interacts with nop5. Component of box C/D small ribonucleoprotein (sRNP) particles that contain rpl7ae, FlpA and nop5, plus a guide RNA.

Its function is as follows. Involved in pre-rRNA and tRNA processing. Utilizes the methyl donor S-adenosyl-L-methionine to catalyze the site-specific 2'-hydroxyl methylation of ribose moieties in rRNA and tRNA. Site specificity is provided by a guide RNA that base pairs with the substrate. Methylation occurs at a characteristic distance from the sequence involved in base pairing with the guide RNA. This chain is Fibrillarin-like rRNA/tRNA 2'-O-methyltransferase, found in Methanosarcina mazei (Methanosarcina frisia).